The sequence spans 139 residues: Probable trafficking protein particle complex subunit 2 (139 aa).

Belongs to the TRAPP small subunits family. Sedlin subfamily. As to quaternary structure, part of the multisubunit TRAPP (transport protein particle) complex.

The protein resides in the cytoplasm. Its subcellular location is the perinuclear region. The protein localises to the endoplasmic reticulum. It localises to the golgi apparatus. In terms of biological role, may play a role in vesicular transport from endoplasmic reticulum to Golgi. Involved in dsRNA uptake. The chain is Probable trafficking protein particle complex subunit 2 from Drosophila melanogaster (Fruit fly).